Here is a 946-residue protein sequence, read N- to C-terminus: Bifunctional glutamine synthetase adenylyltransferase/adenylyl-removing enzyme (946 aa).

Residues 1–440 are adenylyl removase; that stretch reads MKPLSSPLQQ…VFNELIGDDE (440 aa). Residues 449–946 form an adenylyl transferase region; sequence SEQWRELWQD…ASWQKWLVEE (498 aa).

Belongs to the GlnE family. It depends on Mg(2+) as a cofactor.

It catalyses the reaction [glutamine synthetase]-O(4)-(5'-adenylyl)-L-tyrosine + phosphate = [glutamine synthetase]-L-tyrosine + ADP. The catalysed reaction is [glutamine synthetase]-L-tyrosine + ATP = [glutamine synthetase]-O(4)-(5'-adenylyl)-L-tyrosine + diphosphate. Functionally, involved in the regulation of glutamine synthetase GlnA, a key enzyme in the process to assimilate ammonia. When cellular nitrogen levels are high, the C-terminal adenylyl transferase (AT) inactivates GlnA by covalent transfer of an adenylyl group from ATP to specific tyrosine residue of GlnA, thus reducing its activity. Conversely, when nitrogen levels are low, the N-terminal adenylyl removase (AR) activates GlnA by removing the adenylyl group by phosphorolysis, increasing its activity. The regulatory region of GlnE binds the signal transduction protein PII (GlnB) which indicates the nitrogen status of the cell. The sequence is that of Bifunctional glutamine synthetase adenylyltransferase/adenylyl-removing enzyme from Escherichia coli (strain K12 / MC4100 / BW2952).